The primary structure comprises 416 residues: Esterase FrsA (416 aa).

The interval 19 to 39 (ETSTLVRRTRHDQETQGLHST) is disordered.

It belongs to the FrsA family.

The catalysed reaction is a carboxylic ester + H2O = an alcohol + a carboxylate + H(+). Its function is as follows. Catalyzes the hydrolysis of esters. This is Esterase FrsA from Pectobacterium atrosepticum (strain SCRI 1043 / ATCC BAA-672) (Erwinia carotovora subsp. atroseptica).